The following is a 177-amino-acid chain: Large ribosomal subunit protein uL6 (177 aa).

This sequence belongs to the universal ribosomal protein uL6 family. As to quaternary structure, part of the 50S ribosomal subunit.

Functionally, this protein binds to the 23S rRNA, and is important in its secondary structure. It is located near the subunit interface in the base of the L7/L12 stalk, and near the tRNA binding site of the peptidyltransferase center. The polypeptide is Large ribosomal subunit protein uL6 (Neisseria meningitidis serogroup B (strain ATCC BAA-335 / MC58)).